A 189-amino-acid polypeptide reads, in one-letter code: MVVLGIDPGSLATGYGVVSGDGRESFRALSCGLIRLHPRKSHAVRVGEIYRELSELIGELKPDRVAIETAFVGKNVQSALKLGQVRGAIMALSFNSGVPIFEYAPREVKSAVTGRGGAAKEQVAFMVASMLSLSSVPKPFDVTDALGVALCDLLRCGGGQKERQTDMKGSGGGLCGWGDFVRASPDRVL.

Residues aspartate 7, glutamate 68, and aspartate 141 contribute to the active site. The Mg(2+) site is built by aspartate 7, glutamate 68, and aspartate 141.

Belongs to the RuvC family. In terms of assembly, homodimer which binds Holliday junction (HJ) DNA. The HJ becomes 2-fold symmetrical on binding to RuvC with unstacked arms; it has a different conformation from HJ DNA in complex with RuvA. In the full resolvosome a probable DNA-RuvA(4)-RuvB(12)-RuvC(2) complex forms which resolves the HJ. Mg(2+) is required as a cofactor.

Its subcellular location is the cytoplasm. The catalysed reaction is Endonucleolytic cleavage at a junction such as a reciprocal single-stranded crossover between two homologous DNA duplexes (Holliday junction).. In terms of biological role, the RuvA-RuvB-RuvC complex processes Holliday junction (HJ) DNA during genetic recombination and DNA repair. Endonuclease that resolves HJ intermediates. Cleaves cruciform DNA by making single-stranded nicks across the HJ at symmetrical positions within the homologous arms, yielding a 5'-phosphate and a 3'-hydroxyl group; requires a central core of homology in the junction. The consensus cleavage sequence is 5'-(A/T)TT(C/G)-3'. Cleavage occurs on the 3'-side of the TT dinucleotide at the point of strand exchange. HJ branch migration catalyzed by RuvA-RuvB allows RuvC to scan DNA until it finds its consensus sequence, where it cleaves and resolves the cruciform DNA. This chain is Crossover junction endodeoxyribonuclease RuvC, found in Chlorobium phaeovibrioides (strain DSM 265 / 1930) (Prosthecochloris vibrioformis (strain DSM 265)).